The following is a 552-amino-acid chain: Chaperonin GroEL (552 aa).

ATP is bound by residues 30 to 33, Lys-51, 87 to 91, Gly-415, 479 to 481, and Asp-495; these read TLGP, DGTTT, and NAA.

It belongs to the chaperonin (HSP60) family. In terms of assembly, forms a cylinder of 14 subunits composed of two heptameric rings stacked back-to-back. Interacts with the co-chaperonin GroES.

Its subcellular location is the cytoplasm. It carries out the reaction ATP + H2O + a folded polypeptide = ADP + phosphate + an unfolded polypeptide.. In terms of biological role, together with its co-chaperonin GroES, plays an essential role in assisting protein folding. The GroEL-GroES system forms a nano-cage that allows encapsulation of the non-native substrate proteins and provides a physical environment optimized to promote and accelerate protein folding. The sequence is that of Chaperonin GroEL from Stutzerimonas stutzeri (Pseudomonas stutzeri).